Consider the following 1237-residue polypeptide: Clustered mitochondria protein homolog (1237 aa).

One can recognise a Clu domain in the interval 291-535; the sequence is DITRSQENCL…RITPLDVAWS (245 aa). Composition is skewed to basic and acidic residues over residues 575–597 and 845–854; these read RKTA…DKAE and SQIKSQEHSP. Disordered regions lie at residues 575–614 and 845–886; these read RKTA…AVAS and SQIK…VAAS. 3 TPR repeats span residues 957 to 990, 999 to 1032, and 1041 to 1074; these read AKLY…TERT, ILSY…WKII, and ITTM…CEGL. 2 disordered regions span residues 1152–1189 and 1201–1237; these read RLRR…KSIG and FIEG…VQTA. A compositionally biased stretch (polar residues) spans 1156–1187; the sequence is TNLSPRMTIGTKPQPQVGQNAPATTNGATSKS.

This sequence belongs to the CLU family. As to quaternary structure, may associate with the eukaryotic translation initiation factor 3 (eIF-3) complex.

The protein localises to the cytoplasm. Functionally, mRNA-binding protein involved in proper cytoplasmic distribution of mitochondria. The chain is Clustered mitochondria protein homolog from Ajellomyces capsulatus (strain NAm1 / WU24) (Darling's disease fungus).